A 239-amino-acid polypeptide reads, in one-letter code: Aspartate/glutamate leucyltransferase (239 aa).

It belongs to the R-transferase family. Bpt subfamily.

It localises to the cytoplasm. It carries out the reaction N-terminal L-glutamyl-[protein] + L-leucyl-tRNA(Leu) = N-terminal L-leucyl-L-glutamyl-[protein] + tRNA(Leu) + H(+). It catalyses the reaction N-terminal L-aspartyl-[protein] + L-leucyl-tRNA(Leu) = N-terminal L-leucyl-L-aspartyl-[protein] + tRNA(Leu) + H(+). Functions in the N-end rule pathway of protein degradation where it conjugates Leu from its aminoacyl-tRNA to the N-termini of proteins containing an N-terminal aspartate or glutamate. The chain is Aspartate/glutamate leucyltransferase from Campylobacter jejuni subsp. jejuni serotype O:2 (strain ATCC 700819 / NCTC 11168).